The chain runs to 1336 residues: Vascular endothelial growth factor receptor 1 (1336 aa).

The first 22 residues, 1-22, serve as a signal peptide directing secretion; that stretch reads MVSCWDTAVLPCALLGCLLLTG. Residues 23–758 are Extracellular-facing; it reads YCSGSKLKGP…QGTSDKSNLE (736 aa). Ig-like C2-type domains lie at 32–121, 151–214, 230–327, 335–421, 429–549, 556–655, and 661–747; these read PELS…KKME, GREL…VNGH, LDVQ…TSVH, SVKH…LTAT, QIYE…RDIR, PNGF…EVLV, and PLLL…AYLT. Cystine bridges form between Cys53–Cys107 and Cys158–Cys207. N-linked (GlcNAc...) asparagine glycans are attached at residues Asn100, Asn164, Asn196, and Asn251. Cysteines 252 and 311 form a disulfide. N-linked (GlcNAc...) asparagine glycosylation is found at Asn323, Asn417, Asn474, Asn516, Asn597, Asn625, Asn666, and Asn713. 2 disulfides stabilise this stretch: Cys454–Cys535 and Cys577–Cys636. An intrachain disulfide couples Cys682 to Cys731. A helical membrane pass occupies residues 759–780; the sequence is LITLTCTCVAATLFWLLLTLFI. Topologically, residues 781-1336 are cytoplasmic; it reads RKLKRSSSEV…SVVLYSSPPA (556 aa). The 332-residue stretch at 827 to 1158 folds into the Protein kinase domain; that stretch reads LKLGKSLGRG…ELVEKLGDLL (332 aa). ATP contacts are provided by residues 833 to 841 and Lys861; that span reads LGRGAFGKV. Tyr914 bears the Phosphotyrosine; by autocatalysis mark. Residues 941–957 show a composition bias toward basic and acidic residues; that stretch reads KKEKLEPDLEQDQKPRL. The segment at 941 to 982 is disordered; sequence KKEKLEPDLEQDQKPRLDSVSSSESFTSSGFQEDKSVSDVEG. Positions 959–969 are enriched in low complexity; that stretch reads SVSSSESFTSS. Asp1022 (proton acceptor) is an active-site residue. Phosphotyrosine; by autocatalysis is present on residues Tyr1053, Tyr1169, Tyr1213, Tyr1242, Tyr1325, and Tyr1331. The disordered stretch occupies residues 1304-1326; the sequence is RQEDEDDPELGKESCCSPPPDYN.

The protein belongs to the protein kinase superfamily. Tyr protein kinase family. CSF-1/PDGF receptor subfamily. As to quaternary structure, interacts with VEGFA, VEGFB and PGF. Monomer in the absence of bound VEGFA, VEGFB or PGF. Homodimer in the presence of bound VEGFA, VEGFB and PGF. Can also form a heterodimer with KDR. Interacts (tyrosine phosphorylated) with CBL, CRK, GRB2, NCK1, PIK3R1, PLCG, PSEN1 and PTPN11. Probably interacts with PTPRB. Interacts with RACK1. Identified in a complex with CBL and CD2AP. N-glycosylated. Post-translationally, ubiquitinated after VEGFA-mediated autophosphorylation, leading to proteolytic degradation. In terms of processing, autophosphorylated on tyrosine residues upon ligand binding. Autophosphorylation occurs in trans, i.e. one subunit of the dimeric receptor phosphorylates tyrosine residues on the other subunit. Phosphorylation at Tyr-1169 is important for interaction with PLCG. Phosphorylation at Tyr-1213 is important for interaction with PIK3R1, PTPN11, GRB2, and PLCG. Phosphorylation at Tyr-1331 is important for endocytosis and for interaction with CBL, NCK1 and CRK. Is probably dephosphorylated by PTPRB.

The protein localises to the cell membrane. Its subcellular location is the endosome. The catalysed reaction is L-tyrosyl-[protein] + ATP = O-phospho-L-tyrosyl-[protein] + ADP + H(+). Its activity is regulated as follows. Present in an inactive conformation in the absence of bound ligand. Binding of VEGFA, VEGFB or PGF leads to dimerization and activation by autophosphorylation on tyrosine residues. Its function is as follows. Tyrosine-protein kinase that acts as a cell-surface receptor for VEGFA, VEGFB and PGF, and plays an essential role in the development of embryonic vasculature, the regulation of angiogenesis, cell survival, cell migration, macrophage function, chemotaxis, and cancer cell invasion. Acts as a positive regulator of postnatal retinal hyaloid vessel regression. May play an essential role as a negative regulator of embryonic angiogenesis by inhibiting excessive proliferation of endothelial cells. Can promote endothelial cell proliferation, survival and angiogenesis in adulthood. Its function in promoting cell proliferation seems to be cell-type specific. Promotes PGF-mediated proliferation of endothelial cells, and proliferation of some types of cancer cells, but does not promote proliferation of normal fibroblasts. Has very high affinity for VEGFA and relatively low protein kinase activity; may function as a negative regulator of VEGFA signaling by limiting the amount of free VEGFA and preventing its binding to KDR. Modulates KDR signaling by forming heterodimers with KDR. Ligand binding leads to the activation of several signaling cascades. Activation of PLCG leads to the production of the cellular signaling molecules diacylglycerol and inositol 1,4,5-trisphosphate and the activation of protein kinase C. Mediates phosphorylation of PIK3R1, the regulatory subunit of phosphatidylinositol 3-kinase, leading to the activation of phosphatidylinositol kinase and the downstream signaling pathway. Mediates activation of MAPK1/ERK2, MAPK3/ERK1 and the MAP kinase signaling pathway, as well as of the AKT1 signaling pathway. Phosphorylates SRC, YES1 and PLCG, and may also phosphorylate CBL. Promotes phosphorylation of AKT1 and PTK2/FAK1. The polypeptide is Vascular endothelial growth factor receptor 1 (Flt1) (Rattus norvegicus (Rat)).